The chain runs to 406 residues: Zinc finger protein CONSTANS-LIKE 6 (406 aa).

Residues Cys17, Cys20, Cys40, and His45 each coordinate Zn(2+). Residues 17–59 (CDSCVKRRARWYCAADDAFLCHACDGSVHSANPLARRHERVRL) form a B box-type; atypical zinc finger. A disordered region spans residues 63–95 (SAGKYRHASPPHQATWHQGFTRKARTPRGGKKS). Over residues 82–95 (FTRKARTPRGGKKS) the composition is skewed to basic residues. Residues 357 to 399 (REARVSRYREKRRTRLFSKKIRYEVRKLNAEKRPRMKGRFVKR) enclose the CCT domain.

The protein belongs to the CONSTANS family.

The protein resides in the nucleus. The sequence is that of Zinc finger protein CONSTANS-LIKE 6 (COL6) from Arabidopsis thaliana (Mouse-ear cress).